A 108-amino-acid chain; its full sequence is Iron-sulfur cluster assembly protein CyaY (108 aa).

This sequence belongs to the frataxin family.

Its function is as follows. Involved in iron-sulfur (Fe-S) cluster assembly. May act as a regulator of Fe-S biogenesis. This chain is Iron-sulfur cluster assembly protein CyaY, found in Burkholderia cenocepacia (strain ATCC BAA-245 / DSM 16553 / LMG 16656 / NCTC 13227 / J2315 / CF5610) (Burkholderia cepacia (strain J2315)).